Here is a 93-residue protein sequence, read N- to C-terminus: Acylphosphatase (93 aa).

An Acylphosphatase-like domain is found at 6 to 93; it reads RLVAWVRGQV…RGGYEGFAIR (88 aa). Catalysis depends on residues Arg-21 and Asn-40.

Belongs to the acylphosphatase family.

It catalyses the reaction an acyl phosphate + H2O = a carboxylate + phosphate + H(+). This chain is Acylphosphatase (acyP), found in Streptomyces coelicolor (strain ATCC BAA-471 / A3(2) / M145).